We begin with the raw amino-acid sequence, 707 residues long: DNA topoisomerase 1 (707 aa).

In terms of domain architecture, Toprim spans 1–140 (MYAILAEKPS…IKRLWTSSMT (140 aa)). The Topo IA-type catalytic domain maps to 157 to 596 (TLPLYYQAKA…HSKKLSSVLF (440 aa)). The interval 199 to 204 (SLGRVQ) is interaction with DNA. Residue tyrosine 323 is the O-(5'-phospho-DNA)-tyrosine intermediate of the active site.

It belongs to the type IA topoisomerase family. Monomer.

The catalysed reaction is ATP-independent breakage of single-stranded DNA, followed by passage and rejoining.. Its function is as follows. Releases the supercoiling and torsional tension of DNA, which is introduced during the DNA replication and transcription, by transiently cleaving and rejoining one strand of the DNA duplex. Introduces a single-strand break via transesterification at a target site in duplex DNA. The scissile phosphodiester is attacked by the catalytic tyrosine of the enzyme, resulting in the formation of a DNA-(5'-phosphotyrosyl)-enzyme intermediate and the expulsion of a 3'-OH DNA strand. The free DNA strand then undergoes passage around the unbroken strand, thus removing DNA supercoils. Finally, in the religation step, the DNA 3'-OH attacks the covalent intermediate to expel the active-site tyrosine and restore the DNA phosphodiester backbone. The chain is DNA topoisomerase 1 (topA) from Alkalihalophilus pseudofirmus (strain ATCC BAA-2126 / JCM 17055 / OF4) (Bacillus pseudofirmus).